Here is a 546-residue protein sequence, read N- to C-terminus: 6'''-hydroxyparomomycin C oxidase (546 aa).

The disordered stretch occupies residues 1-30 (MERLRGPSPLENTTARHPAPLGPAHRDGLE). The active-site Proton acceptor is H475.

The protein belongs to the GMC oxidoreductase family. Requires FAD as cofactor.

Its pathway is antibiotic biosynthesis; lividomycin biosynthesis. Its function is as follows. Glucosaminyl-6'-oxidase involved in the biosynthetic pathway of lividomycin by mediating FAD-dependent dehydrogenation of 6'''-hydroxyparomomycin to paromomycin. This is 6'''-hydroxyparomomycin C oxidase (livQ) from Streptomyces lividus.